Reading from the N-terminus, the 700-residue chain is Elongation factor G (700 aa).

The tr-type G domain maps to 8–290 (DRYRNVGIMA…AMIMYMPSPL (283 aa)). GTP contacts are provided by residues 17–24 (AHIDAGKT), 88–92 (DTPGH), and 142–145 (NKMD).

Belongs to the TRAFAC class translation factor GTPase superfamily. Classic translation factor GTPase family. EF-G/EF-2 subfamily.

The protein resides in the cytoplasm. Catalyzes the GTP-dependent ribosomal translocation step during translation elongation. During this step, the ribosome changes from the pre-translocational (PRE) to the post-translocational (POST) state as the newly formed A-site-bound peptidyl-tRNA and P-site-bound deacylated tRNA move to the P and E sites, respectively. Catalyzes the coordinated movement of the two tRNA molecules, the mRNA and conformational changes in the ribosome. The protein is Elongation factor G of Vesicomyosocius okutanii subsp. Calyptogena okutanii (strain HA).